Here is a 306-residue protein sequence, read N- to C-terminus: Acetaldehyde dehydrogenase (306 aa).

Residue Cys-131 is the Acyl-thioester intermediate of the active site. Residues 162-170 and Asn-273 each bind NAD(+); that span reads SAGPGTRKN.

It belongs to the acetaldehyde dehydrogenase family.

It carries out the reaction acetaldehyde + NAD(+) + CoA = acetyl-CoA + NADH + H(+). In Albidiferax ferrireducens (strain ATCC BAA-621 / DSM 15236 / T118) (Rhodoferax ferrireducens), this protein is Acetaldehyde dehydrogenase.